We begin with the raw amino-acid sequence, 295 residues long: Protease Rv3090 (295 aa).

2 helical membrane passes run Thr-2–Trp-22 and Val-37–Val-57.

It localises to the cell membrane. Its subcellular location is the secreted. The protein resides in the cell wall. Functionally, protease that triggers late cell apoptosis and contributes to the pathogenicity and dissemination of M.tuberculosis. In a mouse model of infection, can induce hepatocyte and lung cell apoptosis and cause pathological damage to the spleen, liver and lungs. Specifically stimulates the secretion of inflammatory cytokines including TNF-alpha, IL-6 and IL-1 beta. Can degrade casein in vitro. The sequence is that of Protease Rv3090 from Mycobacterium tuberculosis (strain ATCC 25618 / H37Rv).